We begin with the raw amino-acid sequence, 477 residues long: Zinc metalloproteinase/disintegrin (477 aa).

A signal peptide spans 1 to 20; the sequence is MIEVLLVTICLAAFPYQGSS. Positions 21-187 are excised as a propeptide; sequence IILESGNVND…PIKKASQSNL (167 aa). The Peptidase M12B domain occupies 193–389; it reads RYIELFLVVD…DNPQCILNKQ (197 aa). Ca(2+) contacts are provided by Glu196 and Asp280. Disulfide bonds link Cys304-Cys384, Cys344-Cys368, and Cys346-Cys351. His329 is a Zn(2+) binding site. Residue Glu330 is part of the active site. Zn(2+)-binding residues include His333 and His339. Positions 384 and 387 each coordinate Ca(2+). Residues 390-404 constitute a propeptide that is removed on maturation; the sequence is LRTDTVSTPVSGKNF. The Disintegrin domain occupies 396-477; that stretch reads STPVSGKNFG…AGCPRNPFHA (82 aa). Intrachain disulfides connect Cys410/Cys425, Cys412/Cys420, Cys419/Cys442, Cys433/Cys439, Cys438/Cys463, and Cys451/Cys470. Residues 455–457 carry the Cell attachment site motif; sequence RGD.

The protein belongs to the venom metalloproteinase (M12B) family. P-II subfamily. P-IIa sub-subfamily. In terms of assembly, monomer. Zn(2+) serves as cofactor. In terms of tissue distribution, expressed by the venom gland.

It is found in the secreted. With respect to regulation, inhibited by 1,10-phenanthroline and EDTA. Functionally, impairs hemostasis in the envenomed animal. Does not exhibit detectable plasminogen activating activity. Has hemagglutinating activity on red blood cells. Cleaves insulin B chain at '38-Ala-|-Leu-39' and '40-Tyr-|-Leu-41' bonds. In terms of biological role, this recombinant protein shows high inhibitory activity on collagen-induced platelet aggregation. The protein is Zinc metalloproteinase/disintegrin of Bothrops jararaca (Jararaca).